A 769-amino-acid chain; its full sequence is Acetyl-coenzyme A carboxylase carboxyl transferase subunit alpha, chloroplastic (769 aa).

The transit peptide at 1-54 (MASISHSSLALGGASSASASDYLRSSSNGVNGVPLKTLGRAVFTTIRRKDLAVT) directs the protein to the chloroplast. Positions 132-385 (LENKYRQALK…KIAINENMNE (254 aa)) constitute a CoA carboxyltransferase C-terminal domain. 2 coiled-coil regions span residues 426 to 504 (EAVF…ASSE) and 631 to 744 (KQNQ…SDGS). Residues 718–769 (GLQEKQDELEKELAAARELAAEESDGSVKEDDDDDEDSSESGKSEMVNPSFA) are disordered. Over residues 721–732 (EKQDELEKELAA) the composition is skewed to basic and acidic residues. Residues 738 to 756 (AEESDGSVKEDDDDDEDSS) show a composition bias toward acidic residues. Ser-741 is modified (phosphoserine).

It belongs to the AccA family. In terms of assembly, acetyl-CoA carboxylase is a heterohexamer composed of biotin carboxyl carrier protein, biotin carboxylase and two subunits each of ACCase subunit alpha and ACCase plastid-coded subunit beta (accD). In terms of tissue distribution, accumulates in fatty acids synthesizing tissues such as embryos, expanding leaves, flower buds, flowers, and developing siliques.

Its subcellular location is the plastid. It localises to the chloroplast inner membrane. The catalysed reaction is N(6)-carboxybiotinyl-L-lysyl-[protein] + acetyl-CoA = N(6)-biotinyl-L-lysyl-[protein] + malonyl-CoA. The protein operates within lipid metabolism; malonyl-CoA biosynthesis; malonyl-CoA from acetyl-CoA: step 1/1. Component of the acetyl coenzyme A carboxylase (ACC) complex. First, biotin carboxylase catalyzes the carboxylation of biotin on its carrier protein (BCCP) and then the CO(2) group is transferred by the carboxyltransferase to acetyl-CoA to form malonyl-CoA. The protein is Acetyl-coenzyme A carboxylase carboxyl transferase subunit alpha, chloroplastic (CAC3) of Arabidopsis thaliana (Mouse-ear cress).